We begin with the raw amino-acid sequence, 306 residues long: uncharacterized protein (306 aa).

Positions 277 to 306 form a coiled coil; the sequence is TEIIQNYKIANELKKEKQQNKKKNSIELEE.

This is an uncharacterized protein from Saccharolobus islandicus (Sulfolobus islandicus).